The sequence spans 219 residues: Protein matrimony (219 aa).

Residues Pro-74–Gln-99 are compositionally biased toward basic residues. The tract at residues Pro-74 to Pro-104 is disordered. The SAM domain occupies Asn-159 to Leu-219.

Interacts with polo. Interacts with cort. Post-translationally, probably ubiquitinated: degraded during the oocyte-to-embryo transition by the anaphase promoting complex/cyclosome (APC/C) containing cort protein.

Its subcellular location is the nucleus. It is found in the chromosome. Polo kinase inhibitor required to maintain G2 arrest in the meiotic cell cycle in females. Holds heterochromatically paired homologs together from the end of pachytene until metaphase I. Haploinsufficient locus for homologous achiasmate segregation and may be required for the maintenance of heterochromatic pairings. The polypeptide is Protein matrimony (mtrm) (Drosophila yakuba (Fruit fly)).